We begin with the raw amino-acid sequence, 843 residues long: Protein P (843 aa).

The segment at 1–177 (MPLSYQHFRK…FCGSPYSWEQ (177 aa)) is terminal protein domain (TP). The interval 178 to 346 (ELQHGRLVFQ…YCLTHIVNLL (169 aa)) is spacer. The tract at residues 347–690 (EDWGPCTEHG…YLHLYPVARQ (344 aa)) is polymerase/reverse transcriptase domain (RT). The 244-residue stretch at 357–600 (EHNIRIPRTP…YSLNFMGYVI (244 aa)) folds into the Reverse transcriptase domain. Mg(2+) contacts are provided by D429, D551, and D552.

It belongs to the hepadnaviridae P protein family.

The enzyme catalyses DNA(n) + a 2'-deoxyribonucleoside 5'-triphosphate = DNA(n+1) + diphosphate. It catalyses the reaction Endonucleolytic cleavage to 5'-phosphomonoester.. Its activity is regulated as follows. Activated by host HSP70 and HSP40 in vitro to be able to bind the epsilon loop of the pgRNA. Because deletion of the RNase H region renders the protein partly chaperone-independent, the chaperones may be needed indirectly to relieve occlusion of the RNA-binding site by this domain. Inhibited by several reverse-transcriptase inhibitors: Lamivudine, Adefovir and Entecavir. Its function is as follows. Multifunctional enzyme that converts the viral RNA genome into dsDNA in viral cytoplasmic capsids. This enzyme displays a DNA polymerase activity that can copy either DNA or RNA templates, and a ribonuclease H (RNase H) activity that cleaves the RNA strand of RNA-DNA heteroduplexes in a partially processive 3'- to 5'-endonucleasic mode. Neo-synthesized pregenomic RNA (pgRNA) are encapsidated together with the P protein, and reverse-transcribed inside the nucleocapsid. Initiation of reverse-transcription occurs first by binding the epsilon loop on the pgRNA genome, and is initiated by protein priming, thereby the 5'-end of (-)DNA is covalently linked to P protein. Partial (+)DNA is synthesized from the (-)DNA template and generates the relaxed circular DNA (RC-DNA) genome. After budding and infection, the RC-DNA migrates in the nucleus, and is converted into a plasmid-like covalently closed circular DNA (cccDNA). The activity of P protein does not seem to be necessary for cccDNA generation, and is presumably released from (+)DNA by host nuclear DNA repair machinery. This Hepatitis B virus genotype C subtype adr (isolate Japan/Nishioka/1983) (HBV-C) protein is Protein P.